The chain runs to 903 residues: Centrobin (903 aa).

Over residues methionine 1–serine 10 the composition is skewed to polar residues. The disordered stretch occupies residues methionine 1–valine 34. Serine 80 is subject to Phosphoserine. Disordered regions lie at residues leucine 110–serine 140, leucine 471–glutamine 493, leucine 568–arginine 597, serine 669–alanine 704, arginine 772–threonine 799, and serine 837–arginine 903. A coiled-coil region spans residues arginine 196–histidine 560. The interval glutamine 365–arginine 903 is required for centrosome localization. Positions leucine 572–glutamine 590 are enriched in pro residues. Positions histidine 675–proline 685 are enriched in basic and acidic residues. The span at serine 778–proline 791 shows a compositional bias: low complexity. Position 790 is a phosphoserine (serine 790). Residues serine 837–isoleucine 863 are compositionally biased toward basic and acidic residues.

In terms of assembly, interacts with LYST. As to expression, widely expressed (at protein level). Highly expressed in testis. Also expressed in spleen, thymus, prostate, small intestine, colon and peripheral blood leukocytes.

The protein resides in the cytoplasm. The protein localises to the cytoskeleton. It is found in the microtubule organizing center. Its subcellular location is the centrosome. It localises to the centriole. Its function is as follows. Required for centriole duplication. Inhibition of centriole duplication leading to defects in cytokinesis. The protein is Centrobin (CNTROB) of Homo sapiens (Human).